The following is a 458-amino-acid chain: COBRA-like protein 2 (458 aa).

The first 29 residues, 1-29, serve as a signal peptide directing secretion; it reads MARFLLGAAAIALLAGVSSLLLMVPFAEA. N-linked (GlcNAc...) asparagine glycosylation is found at N38, N163, N171, N211, N236, N318, N333, and N352. The helical transmembrane segment at 430 to 450 threads the bilayer; that stretch reads VFLLMSFLVCGTLAFLHNHLV.

It belongs to the COBRA family.

The protein resides in the membrane. The sequence is that of COBRA-like protein 2 (BC1L2) from Oryza sativa subsp. japonica (Rice).